The chain runs to 187 residues: Signal peptidase complex catalytic subunit SEC11 (187 aa).

The Cytoplasmic segment spans residues M1–Q18. A helical; Signal-anchor for type II membrane protein membrane pass occupies residues V19 to I39. Residues T40–E187 lie on the Lumenal side of the membrane. Catalysis depends on charge relay system residues S53 and H92. Residue N125 is glycosylated (N-linked (GlcNAc...) asparagine). The active-site Charge relay system is the D129. Residues V173–L184 are C-terminal short (CTS) helix.

The protein belongs to the peptidase S26B family. Component of the signal peptidase complex (SPC) composed of a catalytic subunit SEC11 and three accessory subunits SPC1, SPC2 and SPC3. The complex induces a local thinning of the ER membrane which is used to measure the length of the signal peptide (SP) h-region of protein substrates. This ensures the selectivity of the complex towards h-regions shorter than 18-20 amino acids. SPC associates with the translocon complex.

Its subcellular location is the endoplasmic reticulum membrane. The enzyme catalyses Cleavage of hydrophobic, N-terminal signal or leader sequences from secreted and periplasmic proteins.. Its function is as follows. Catalytic component of the signal peptidase complex (SPC) which catalyzes the cleavage of N-terminal signal sequences from nascent proteins as they are translocated into the lumen of the endoplasmic reticulum. Specifically cleaves N-terminal signal peptides that contain a hydrophobic alpha-helix (h-region) shorter than 18-20 amino acids. The polypeptide is Signal peptidase complex catalytic subunit SEC11 (SEC11) (Ajellomyces capsulatus (strain NAm1 / WU24) (Darling's disease fungus)).